The chain runs to 453 residues: MTDASALDFDVVPSTDQSFENALANARDGRRLTVADGIELITTGTDTDGIDPRRKELVLEAADRRRADVVGDDVTFVANLNNNVTTACNTGCLFCNFKDTAHRFETEHEAAHGGFTKTPAESKATVADAIQRGVSEVTSVSGLHPAFGLNEAHRDALDPDDPDHNYKPPEAYDTDPTTYAAQIAAMSEAGAHVHSITPEEAHHAQRGVSWGYDEVYETLADAGLDTVPGTAAEILVDEVRDVICPGKMTTDEWVAAMEAAADAGLGTTATIMYGHVENAAHRIHHLDVIRALQDRTHNITEFVPLSFIHEQTPLYERGVVDGGASDAEDELMIAVSRLFLDNIDHIQSSWVKFGDAKGLALLNCGADDFMGTILSEEITKRAGGQHGEFRSVADYAEMISAIGRTPVERSTDYTTRHVINPDADTIGPHVGPNADGTPLVSERAGTPPHSAGD.

The Radical SAM core domain maps to 74 to 344; the sequence is VTFVANLNNN…VSRLFLDNID (271 aa). Residues Cys88, Cys92, and Cys95 each contribute to the [4Fe-4S] cluster site. Residues 418 to 453 are disordered; sequence VINPDADTIGPHVGPNADGTPLVSERAGTPPHSAGD.

The protein belongs to the radical SAM superfamily. CofH family. Consists of two subunits, CofG and CofH. The cofactor is [4Fe-4S] cluster.

The enzyme catalyses 5-amino-6-(D-ribitylamino)uracil + L-tyrosine + S-adenosyl-L-methionine = 5-amino-5-(4-hydroxybenzyl)-6-(D-ribitylimino)-5,6-dihydrouracil + 2-iminoacetate + 5'-deoxyadenosine + L-methionine + H(+). It functions in the pathway cofactor biosynthesis; coenzyme F0 biosynthesis. Catalyzes the radical-mediated synthesis of 5-amino-5-(4-hydroxybenzyl)-6-(D-ribitylimino)-5,6-dihydrouracil from 5-amino-6-(D-ribitylamino)uracil and L-tyrosine. This chain is 5-amino-6-(D-ribitylamino)uracil--L-tyrosine 4-hydroxyphenyl transferase (cofH), found in Halobacterium salinarum (strain ATCC 700922 / JCM 11081 / NRC-1) (Halobacterium halobium).